A 288-amino-acid polypeptide reads, in one-letter code: Pyridoxal kinase PdxY (288 aa).

Substrate-binding positions include Ser9 and 44-45 (TQ). ATP contacts are provided by Asp111, Glu148, and Lys181. Asp224 serves as a coordination point for substrate.

It belongs to the pyridoxine kinase family. PdxY subfamily. Homodimer. Requires Mg(2+) as cofactor.

It carries out the reaction pyridoxal + ATP = pyridoxal 5'-phosphate + ADP + H(+). The protein operates within cofactor metabolism; pyridoxal 5'-phosphate salvage; pyridoxal 5'-phosphate from pyridoxal: step 1/1. Its function is as follows. Pyridoxal kinase involved in the salvage pathway of pyridoxal 5'-phosphate (PLP). Catalyzes the phosphorylation of pyridoxal to PLP. The sequence is that of Pyridoxal kinase PdxY from Haemophilus influenzae (strain ATCC 51907 / DSM 11121 / KW20 / Rd).